Here is a 525-residue protein sequence, read N- to C-terminus: Vesicular inhibitory amino acid transporter (525 aa).

The Cytoplasmic portion of the chain corresponds to 1–132 (MATLLRSKLS…WNVTNAIQGM (132 aa)). A disordered region spans residues 69–111 (PCGDEGAEPPVEGDIHYQRGSGAPLPPSGSKDQVGAGGEFGGH). A helical transmembrane segment spans residues 133–153 (FVLGLPYAILHGGYLGLFLII). Residues 154–204 (FAAVVCCYTGKILIACLYEENEDGEVVRVRDSYVAIANACCAPRFPTLGGR) are Lumenal, vesicle-facing. Tyr-186 is modified (3'-nitrotyrosine). The chain crosses the membrane as a helical span at residues 205-225 (VVNVAQIIELVMTCILYVVVS). Over 226-265 (GNLMYNSFPGLPVSQKSWSIIATAVLLPCAFLKNLKAVSK) the chain is Cytoplasmic. A helical membrane pass occupies residues 266–286 (FSLLCTLAHFVINILVIAYCL). Over 287–305 (SRARDWAWEKVKFYIDVKK) the chain is Lumenal, vesicle. Residues 306-326 (FPISIGIIVFSYTSQIFLPSL) traverse the membrane as a helical segment. Topologically, residues 327-341 (EGNMQQPSEFHCMMN) are cytoplasmic. A helical transmembrane segment spans residues 342–362 (WTHIAACVLKGLFALVAYLTW). Topologically, residues 363 to 383 (ADETKEVITDNLPGSIRAVVN) are lumenal, vesicle. A helical membrane pass occupies residues 384-404 (IFLVAKALLSYPLPFFAAVEV). The Cytoplasmic segment spans residues 405 to 438 (LEKSLFQEGSRAFFPACYGGDGRLKSWGLTLRCA). Residues 439 to 459 (LVVFTLLMAIYVPHFALLMGL) traverse the membrane as a helical segment. Over 460 to 461 (TG) the chain is Lumenal, vesicle. Residues 462–482 (SLTGAGLCFLLPSLFHLRLLW) traverse the membrane as a helical segment. Over 483–489 (RKLLWHQ) the chain is Cytoplasmic. A helical transmembrane segment spans residues 490-510 (VFFDVAIFVIGGICSVSGFVH). Over 511–525 (SLEGLIEAYRTNAED) the chain is Lumenal, vesicle.

Belongs to the amino acid/polyamine transporter 2 family.

The protein localises to the cytoplasmic vesicle membrane. The protein resides in the presynapse. It catalyses the reaction 4-aminobutanoate(out) + n H(+)(in) = 4-aminobutanoate(in) + n H(+)(out). The enzyme catalyses glycine(out) + n H(+)(in) = glycine(in) + n H(+)(out). It carries out the reaction beta-alanine(out) + n H(+)(in) = beta-alanine(in) + n H(+)(out). In terms of biological role, antiporter that exchanges vesicular protons for cytosolic 4-aminobutanoate or to a lesser extend glycine, thus allowing their secretion from nerve terminals. The transport is equally dependent on the chemical and electrical components of the proton gradient. May also transport beta-alanine. Acidification of GABAergic synaptic vesicles is a prerequisite for 4-aminobutanoate uptake. This Macaca fascicularis (Crab-eating macaque) protein is Vesicular inhibitory amino acid transporter.